A 780-amino-acid chain; its full sequence is GATOR2 complex protein WDR24 (780 aa).

WD repeat units follow at residues 67-107 (SLNF…RNKQ), 113-153 (EHKR…SVST), 156-196 (GQSE…RCER), 200-240 (AHNG…AKEI), 244-286 (QTIA…IPFA), and 290-333 (EHKD…IDRA). A C4-type zinc finger spans residues 708–730 (NCSNCKRPMSNKGWICDRCRQCA). Cysteine 709, cysteine 712, cysteine 723, cysteine 726, cysteine 733, cysteine 736, cysteine 747, cysteine 750, histidine 752, histidine 755, histidine 758, cysteine 769, cysteine 773, histidine 775, and cysteine 777 together coordinate Zn(2+). Residues 731–780 (SMCAVCHHVVKGLFVWCQGCCHGGHLQHIMNWMQNNCYCPAGCGHVCEYS) form an RING-type; atypical zinc finger.

The protein belongs to the WD repeat WDR24 family. In terms of assembly, component of the GATOR2 subcomplex, composed of MIOS, SEC13, SEH1L, WDR24 and WDR59. The GATOR2 complex interacts with CASTOR1 and CASTOR2; the interaction is negatively regulated by arginine. The GATOR2 complex interacts with SESN1, SESN2 and SESN3; the interaction is negatively regulated by amino acids.

The protein localises to the lysosome membrane. It catalyses the reaction S-ubiquitinyl-[E2 ubiquitin-conjugating enzyme]-L-cysteine + [acceptor protein]-L-lysine = [E2 ubiquitin-conjugating enzyme]-L-cysteine + N(6)-ubiquitinyl-[acceptor protein]-L-lysine.. Its pathway is protein modification; protein ubiquitination. Its activity is regulated as follows. The GATOR2 complex is negatively regulated by the upstream amino acid sensors CASTOR1 and SESN2, which sequester the GATOR2 complex in absence of amino acids. In the presence of abundant amino acids, GATOR2 is released from CASTOR1 and SESN2 and activated. In terms of biological role, catalytic component of the GATOR2 complex, a multiprotein complex that acts as an activator of the amino acid-sensing branch of the mTORC1 signaling pathway. The GATOR2 complex indirectly activates mTORC1 through the inhibition of the GATOR1 subcomplex. GATOR2 probably acts as an E3 ubiquitin-protein ligase toward GATOR1. In the presence of abundant amino acids, the GATOR2 complex mediates ubiquitination of the NPRL2 core component of the GATOR1 complex, leading to GATOR1 inactivation. In the absence of amino acids, GATOR2 is inhibited, activating the GATOR1 complex. In addition to its role in regulation of the mTORC1 complex, promotes the acidification of lysosomes and facilitates autophagic flux. Within the GATOR2 complex, WDR24 constitutes the catalytic subunit that mediates 'Lys-6'-linked ubiquitination of NPRL2. This is GATOR2 complex protein WDR24 from Xenopus laevis (African clawed frog).